We begin with the raw amino-acid sequence, 424 residues long: Phosphoribosylamine--glycine ligase (424 aa).

The region spanning 111–312 is the ATP-grasp domain; sequence KAFVKECGIK…LLDLFLATAK (202 aa). Position 137-189 (137-189) interacts with ATP; that stretch reads IQNASFPLVIKALNKNTSIVHHQEEALKILEDALKQSNEPVIIEPFLEGFELS.

It belongs to the GARS family.

It carries out the reaction 5-phospho-beta-D-ribosylamine + glycine + ATP = N(1)-(5-phospho-beta-D-ribosyl)glycinamide + ADP + phosphate + H(+). It participates in purine metabolism; IMP biosynthesis via de novo pathway; N(1)-(5-phospho-D-ribosyl)glycinamide from 5-phospho-alpha-D-ribose 1-diphosphate: step 2/2. The protein is Phosphoribosylamine--glycine ligase (purD) of Helicobacter pylori (strain J99 / ATCC 700824) (Campylobacter pylori J99).